Consider the following 1790-residue polypeptide: Atrochrysone carboxylic acid synthase (1790 aa).

Residues 27 to 265 (RDLQDLFRQA…ALPVYGGLCH (239 aa)) are N-terminal acylcarrier protein transacylase domain (SAT). The region spanning 399–833 (QSKLAIVGMS…GGNTTMILED (435 aa)) is the Ketosynthase family 3 (KS3) domain. Residues Cys-572, His-708, and His-751 each act as for beta-ketoacyl synthase activity in the active site. A malonyl-CoA:ACP transacylase (MAT) domain region spans residues 934–1254 (FSFTGQGASH…IAQLYTVGVD (321 aa)). The N-terminal hotdog fold stretch occupies residues 1323–1475 (QQIVEQVFDT…SLTHLVRDRI (153 aa)). Residues 1323–1634 (QQIVEQVFDT…FHRYRRILLE (312 aa)) enclose the PKS/mFAS DH domain. His-1357 (proton acceptor; for dehydratase activity) is an active-site residue. The segment at 1357-1631 (HRMNDCGVAT…GIEFHRYRRI (275 aa)) is product template (PT) domain. Residues 1487–1634 (ANRLSHNMAY…FHRYRRILLE (148 aa)) are C-terminal hotdog fold. The active-site Proton donor; for dehydratase activity is the Asp-1545. The segment at 1644 to 1667 (NLDDTTETKDISSSTQHSVPVSRQ) is disordered. Residues 1654 to 1664 (ISSSTQHSVPV) show a composition bias toward polar residues. A Carrier domain is found at 1715 to 1789 (SSITNRAMQL…DLRNWLEETY (75 aa)). Position 1749 is an O-(pantetheine 4'-phosphoryl)serine (Ser-1749).

The catalysed reaction is holo-[ACP] + 8 malonyl-CoA + 8 H(+) = atrochrysone carboxyl-[ACP] + 8 CO2 + 8 CoA + 2 H2O. The protein operates within pigment biosynthesis. Non-reducing polyketide synthase; part of the gene cluster that mediates the biosynthesis of the bianthraquinone cladofulvin, a conidial pigment not required for virulence but that plays a role in fitness and resistance to environmental stresses including UV light and low-temperature stress. The pathway begins with the synthesis of atrochrysone thioester by the polyketide synthase (PKS) claG. The atrochrysone carboxyl ACP thioesterase claF then breaks the thioester bond and releases the atrochrysone carboxylic acid from claG. This compound is decarboxylated by claH to yield emodin, which is further converted to chrysophanol hydroquinone by the reductase claC and the dehydratase claB. The cytochrome P450 monooxygenase claM then catalyzes the dimerization of nataloe-emodin to cladofulvin. This chain is Atrochrysone carboxylic acid synthase, found in Passalora fulva (Tomato leaf mold).